The chain runs to 321 residues: NADH-ubiquinone oxidoreductase chain 1 (321 aa).

8 helical membrane passes run 2–22 (LVMLTSTLILVLMVLLAVAFL), 71–91 (ALFIAAPIMALTLALSLWMFI), 104–124 (LLVILAISSLSVYASLGSGWA), 148–168 (LGLILLCLIILTGGFSLQAFI), 173–193 (HTWFLLSSWPLAAMWFVSTLA), 224–244 (LFFLAEYSNILFMNTLTAIMF), 255–275 (ILPIINVMMKATPLIILFLWI), and 295–315 (FLPLNLALFTLQLSLAVSLGG).

This sequence belongs to the complex I subunit 1 family.

The protein localises to the mitochondrion inner membrane. The catalysed reaction is a ubiquinone + NADH + 5 H(+)(in) = a ubiquinol + NAD(+) + 4 H(+)(out). In terms of biological role, core subunit of the mitochondrial membrane respiratory chain NADH dehydrogenase (Complex I) that is believed to belong to the minimal assembly required for catalysis. Complex I functions in the transfer of electrons from NADH to the respiratory chain. The immediate electron acceptor for the enzyme is believed to be ubiquinone. In Lampetra fluviatilis (European river lamprey), this protein is NADH-ubiquinone oxidoreductase chain 1 (MT-ND1).